Here is a 352-residue protein sequence, read N- to C-terminus: DNA polymerase IV (352 aa).

The UmuC domain occupies 6–186; it reads IIHIDMDAFY…LPLGKIPGVG (181 aa). Mg(2+) contacts are provided by Asp10 and Asp104. The active site involves Glu105.

It belongs to the DNA polymerase type-Y family. As to quaternary structure, monomer. It depends on Mg(2+) as a cofactor.

The protein resides in the cytoplasm. It catalyses the reaction DNA(n) + a 2'-deoxyribonucleoside 5'-triphosphate = DNA(n+1) + diphosphate. Poorly processive, error-prone DNA polymerase involved in untargeted mutagenesis. Copies undamaged DNA at stalled replication forks, which arise in vivo from mismatched or misaligned primer ends. These misaligned primers can be extended by PolIV. Exhibits no 3'-5' exonuclease (proofreading) activity. May be involved in translesional synthesis, in conjunction with the beta clamp from PolIII. The polypeptide is DNA polymerase IV (Neisseria meningitidis serogroup C / serotype 2a (strain ATCC 700532 / DSM 15464 / FAM18)).